Consider the following 357-residue polypeptide: Anthranilate phosphoribosyltransferase (357 aa).

5-phospho-alpha-D-ribose 1-diphosphate-binding positions include Gly94, Gly97–Asp98, Thr102, Asn104–Thr107, Lys122–Ser130, and Gly134. Gly94 is an anthranilate binding site. Ser106 provides a ligand contact to Mg(2+). Asn125 provides a ligand contact to anthranilate. Residue Arg180 participates in anthranilate binding. Residues Asp238 and Glu239 each contribute to the Mg(2+) site.

This sequence belongs to the anthranilate phosphoribosyltransferase family. Homodimer. Mg(2+) serves as cofactor.

The catalysed reaction is N-(5-phospho-beta-D-ribosyl)anthranilate + diphosphate = 5-phospho-alpha-D-ribose 1-diphosphate + anthranilate. Its pathway is amino-acid biosynthesis; L-tryptophan biosynthesis; L-tryptophan from chorismate: step 2/5. In terms of biological role, catalyzes the transfer of the phosphoribosyl group of 5-phosphorylribose-1-pyrophosphate (PRPP) to anthranilate to yield N-(5'-phosphoribosyl)-anthranilate (PRA). The protein is Anthranilate phosphoribosyltransferase of Mycobacterium sp. (strain JLS).